The following is a 290-amino-acid chain: uncharacterized protein (290 aa).

Residues 161–216 adopt a coiled-coil conformation; that stretch reads SNQREVESLEQLVHEQLNKLNTESKMEFENRKNDTKNEVQQLSARIVELHNLLAVS. The helical transmembrane segment at 236-256 threads the bilayer; it reads AGVVMAFTGFLVLVIPFGLGV.

It localises to the mitochondrion membrane. This is an uncharacterized protein from Schizosaccharomyces pombe (strain 972 / ATCC 24843) (Fission yeast).